A 184-amino-acid chain; its full sequence is Photosystem I assembly protein Ycf4 (184 aa).

Helical transmembrane passes span 21-43 and 63-85; these read NYFW…VSSY and GIVM…FTIF.

Belongs to the Ycf4 family.

It is found in the plastid. It localises to the chloroplast thylakoid membrane. Its function is as follows. Seems to be required for the assembly of the photosystem I complex. The sequence is that of Photosystem I assembly protein Ycf4 from Chaetosphaeridium globosum (Charophycean green alga).